A 404-amino-acid polypeptide reads, in one-letter code: Cysteine desulfurase IscS (404 aa).

Residues 75-76, Asn-155, Gln-183, and 203-205 each bind pyridoxal 5'-phosphate; these read AT and SGH. Lys-206 bears the N6-(pyridoxal phosphate)lysine mark. Thr-243 lines the pyridoxal 5'-phosphate pocket. Cys-328 (cysteine persulfide intermediate) is an active-site residue. Cys-328 serves as a coordination point for [2Fe-2S] cluster.

Belongs to the class-V pyridoxal-phosphate-dependent aminotransferase family. NifS/IscS subfamily. Homodimer. Forms a heterotetramer with IscU, interacts with other sulfur acceptors. It depends on pyridoxal 5'-phosphate as a cofactor.

Its subcellular location is the cytoplasm. The enzyme catalyses (sulfur carrier)-H + L-cysteine = (sulfur carrier)-SH + L-alanine. The protein operates within cofactor biosynthesis; iron-sulfur cluster biosynthesis. Master enzyme that delivers sulfur to a number of partners involved in Fe-S cluster assembly, tRNA modification or cofactor biosynthesis. Catalyzes the removal of elemental sulfur atoms from cysteine to produce alanine. Functions as a sulfur delivery protein for Fe-S cluster synthesis onto IscU, an Fe-S scaffold assembly protein, as well as other S acceptor proteins. The polypeptide is Cysteine desulfurase IscS (Serratia proteamaculans (strain 568)).